The chain runs to 761 residues: Protein ACTIVITY OF BC1 COMPLEX KINASE 8, chloroplastic (761 aa).

The N-terminal 57 residues, 1 to 57, are a transit peptide targeting the chloroplast; sequence MATSSSSSSSLLLPNINFNSRQSPTITRSVSIAGIFLPRNRLSYNHNLRIRTRLIRA. The Protein kinase domain maps to 288 to 648; that stretch reads RFDYEPIAAA…VKDLRKRWDR (361 aa). ATP contacts are provided by residues 294–302 and Lys-315; that span reads IAAASLGQV. Residue Asp-452 is the Proton acceptor of the active site. Residues 725 to 745 form a helical membrane-spanning segment; it reads PATIAYTVCAFFSLQVLIGII.

It belongs to the protein kinase superfamily. ADCK protein kinase family. As to expression, mostly expressed in leaves and flowers, and, to a lower extent, in stems, siliques and roots.

The protein localises to the plastid. Its subcellular location is the chloroplast envelope. It localises to the chloroplast membrane. The enzyme catalyses L-seryl-[protein] + ATP = O-phospho-L-seryl-[protein] + ADP + H(+). It carries out the reaction L-threonyl-[protein] + ATP = O-phospho-L-threonyl-[protein] + ADP + H(+). Functionally, involved in resistance to oxidative stress (e.g. hydrogen peroxide H(2)O(2)), high light and heavy metals (e.g. cadmium ions Cd(2+)). Influences responses to reactive oxygen species (ROS) production. Together with SIA1, regulates iron distribution within the chloroplast and mediates the oxidative stress response. Together with ABC1K7, influences chloroplast lipid synthesis/accumulation and modulates chloroplast membrane composition in response to stress. In Arabidopsis thaliana (Mouse-ear cress), this protein is Protein ACTIVITY OF BC1 COMPLEX KINASE 8, chloroplastic.